A 61-amino-acid chain; its full sequence is Small ribosomal subunit protein bS21 (61 aa).

This sequence belongs to the bacterial ribosomal protein bS21 family.

The chain is Small ribosomal subunit protein bS21 from Leuconostoc mesenteroides subsp. mesenteroides (strain ATCC 8293 / DSM 20343 / BCRC 11652 / CCM 1803 / JCM 6124 / NCDO 523 / NBRC 100496 / NCIMB 8023 / NCTC 12954 / NRRL B-1118 / 37Y).